The following is a 680-amino-acid chain: Harmonin-binding protein USHBP1 (680 aa).

The span at Met1–His15 shows a compositional bias: basic residues. Disordered regions lie at residues Met1 to Pro51 and Lys134 to Gln161. Positions Asn179–Ser218 form a coiled coil. Disordered regions lie at residues Pro220–Asp247 and Thr384–Glu405. Coiled coils occupy residues Thr363–Glu386 and Gln467–Gln506. The interval Phe524–Gln549 is disordered. Residues Gln573–Ala662 are a coiled coil.

It belongs to the MCC family. Interacts via its C-terminus with the first PDZ domain of USH1C.

This chain is Harmonin-binding protein USHBP1, found in Mus musculus (Mouse).